The primary structure comprises 143 residues: 6,7-dimethyl-8-ribityllumazine synthase (143 aa).

Residues tryptophan 10, serine 44–glutamate 46, and cysteine 68–isoleucine 70 contribute to the 5-amino-6-(D-ribitylamino)uracil site. Aspartate 73 to threonine 74 contributes to the (2S)-2-hydroxy-3-oxobutyl phosphate binding site. The active-site Proton donor is histidine 76. 5-amino-6-(D-ribitylamino)uracil is bound at residue tyrosine 101. Residue arginine 115 participates in (2S)-2-hydroxy-3-oxobutyl phosphate binding.

It belongs to the DMRL synthase family.

The enzyme catalyses (2S)-2-hydroxy-3-oxobutyl phosphate + 5-amino-6-(D-ribitylamino)uracil = 6,7-dimethyl-8-(1-D-ribityl)lumazine + phosphate + 2 H2O + H(+). Its pathway is cofactor biosynthesis; riboflavin biosynthesis; riboflavin from 2-hydroxy-3-oxobutyl phosphate and 5-amino-6-(D-ribitylamino)uracil: step 1/2. Catalyzes the formation of 6,7-dimethyl-8-ribityllumazine by condensation of 5-amino-6-(D-ribitylamino)uracil with 3,4-dihydroxy-2-butanone 4-phosphate. This is the penultimate step in the biosynthesis of riboflavin. The chain is 6,7-dimethyl-8-ribityllumazine synthase from Bacteroides fragilis (strain YCH46).